Consider the following 435-residue polypeptide: Asparagine--tRNA ligase (435 aa).

The protein belongs to the class-II aminoacyl-tRNA synthetase family. In terms of assembly, homodimer.

The protein localises to the cytoplasm. It carries out the reaction tRNA(Asn) + L-asparagine + ATP = L-asparaginyl-tRNA(Asn) + AMP + diphosphate + H(+). This Leptospira interrogans serogroup Icterohaemorrhagiae serovar copenhageni (strain Fiocruz L1-130) protein is Asparagine--tRNA ligase.